A 259-amino-acid chain; its full sequence is Type III pantothenate kinase (259 aa).

9 to 16 (DAGNSRIK) serves as a coordination point for ATP. Residues Tyr93 and 100-103 (GSDR) contribute to the substrate site. Asp102 (proton acceptor) is an active-site residue. Thr126 is a binding site for ATP. Substrate is bound at residue Thr190.

Belongs to the type III pantothenate kinase family. As to quaternary structure, homodimer. NH4(+) is required as a cofactor. K(+) serves as cofactor.

It is found in the cytoplasm. It catalyses the reaction (R)-pantothenate + ATP = (R)-4'-phosphopantothenate + ADP + H(+). It functions in the pathway cofactor biosynthesis; coenzyme A biosynthesis; CoA from (R)-pantothenate: step 1/5. Its function is as follows. Catalyzes the phosphorylation of pantothenate (Pan), the first step in CoA biosynthesis. The sequence is that of Type III pantothenate kinase from Burkholderia pseudomallei (strain K96243).